The chain runs to 413 residues: MTDNRVENSSGRAARKLRLALMGPAFIAAIGYIDPGNFATNIQAGASFGYQLLWVVVWANLMAMLIQILSAKLGIATGKNLAEQIRDHYPRPVVWFYWVQAEIIAMATDLAEFIGAAIGFKLILGVSLLQGAVLTGIATFLILMLQRRGQKPLEKVIGGLLLFVAAAYIVELFFSQPDMAQLGKGMVIPALPNPEAVFLAAGVLGATIMPHVIYLHSSLTQHLHGGTRQQRYSATKWDVAIAMTIAGFVNLAMMATAAAAFHFSGHTGIADLDQAYLTLEPLLSHAAATVFGLSLVAAGLSSTVVGTLAGQVVMQGFVRFHIPLWVRRTITMLPSFIVILMGLDPTRILVMSQVLLSFGIALALVPLLIFTSNATLMGELVNTRRVKQVGWIIVVLVVALNIWLLVGTVMGLS.

The Cytoplasmic segment spans residues 1–19; it reads MTDNRVENSSGRAARKLRL. A helical transmembrane segment spans residues 20 to 39; sequence ALMGPAFIAAIGYIDPGNFA. The Periplasmic portion of the chain corresponds to 40–51; it reads TNIQAGASFGYQ. Residues 52–71 traverse the membrane as a helical segment; that stretch reads LLWVVVWANLMAMLIQILSA. The Cytoplasmic portion of the chain corresponds to 72–95; the sequence is KLGIATGKNLAEQIRDHYPRPVVW. A helical transmembrane segment spans residues 96–118; that stretch reads FYWVQAEIIAMATDLAEFIGAAI. At 119 to 125 the chain is on the periplasmic side; sequence GFKLILG. A helical transmembrane segment spans residues 126 to 145; the sequence is VSLLQGAVLTGIATFLILML. Residues 146–155 are Cytoplasmic-facing; the sequence is QRRGQKPLEK. Residues 156-175 traverse the membrane as a helical segment; the sequence is VIGGLLLFVAAAYIVELFFS. The Periplasmic segment spans residues 176–196; the sequence is QPDMAQLGKGMVIPALPNPEA. Residues 197–220 form a helical membrane-spanning segment; the sequence is VFLAAGVLGATIMPHVIYLHSSLT. The Cytoplasmic portion of the chain corresponds to 221-238; that stretch reads QHLHGGTRQQRYSATKWD. The helical transmembrane segment at 239–258 threads the bilayer; sequence VAIAMTIAGFVNLAMMATAA. Residues 259 to 276 are Periplasmic-facing; that stretch reads AAFHFSGHTGIADLDQAY. Residues 277-297 traverse the membrane as a helical segment; that stretch reads LTLEPLLSHAAATVFGLSLVA. The Cytoplasmic portion of the chain corresponds to 298–327; it reads AGLSSTVVGTLAGQVVMQGFVRFHIPLWVR. The helical transmembrane segment at 328-344 threads the bilayer; that stretch reads RTITMLPSFIVILMGLD. At 345-350 the chain is on the periplasmic side; it reads PTRILV. Residues 351–370 form a helical membrane-spanning segment; sequence MSQVLLSFGIALALVPLLIF. Residues 371–387 are Cytoplasmic-facing; the sequence is TSNATLMGELVNTRRVK. The chain crosses the membrane as a helical span at residues 388–406; it reads QVGWIIVVLVVALNIWLLV. Over 407-413 the chain is Periplasmic; sequence GTVMGLS.

This sequence belongs to the NRAMP family.

It localises to the cell inner membrane. Its function is as follows. H(+)-stimulated, divalent metal cation uptake system. The protein is Divalent metal cation transporter MntH of Salmonella paratyphi C (strain RKS4594).